The sequence spans 213 residues: Protein-L-isoaspartate O-methyltransferase (213 aa).

Serine 61 is an active-site residue.

It belongs to the methyltransferase superfamily. L-isoaspartyl/D-aspartyl protein methyltransferase family.

It localises to the cytoplasm. The catalysed reaction is [protein]-L-isoaspartate + S-adenosyl-L-methionine = [protein]-L-isoaspartate alpha-methyl ester + S-adenosyl-L-homocysteine. In terms of biological role, catalyzes the methyl esterification of L-isoaspartyl residues in peptides and proteins that result from spontaneous decomposition of normal L-aspartyl and L-asparaginyl residues. It plays a role in the repair and/or degradation of damaged proteins. The protein is Protein-L-isoaspartate O-methyltransferase of Maricaulis maris (strain MCS10) (Caulobacter maris).